A 431-amino-acid polypeptide reads, in one-letter code: Zeaxanthin glucosyltransferase (431 aa).

It belongs to the UDP-glycosyltransferase family.

The catalysed reaction is all-trans-zeaxanthin + 2 UDP-alpha-D-glucose = zeaxanthin bis(beta-D-glucoside) + 2 UDP + 2 H(+). It functions in the pathway carotenoid biosynthesis; zeaxanthin diglucoside biosynthesis. Catalyzes the glycosylation reaction which converts zeaxanthin to zeaxanthin bis(beta-D-glucoside). The reaction proceeds in two steps with the monoglucoside as an intermediate. This chain is Zeaxanthin glucosyltransferase (crtX), found in Pantoea ananas (Erwinia uredovora).